A 247-amino-acid chain; its full sequence is Segregation and condensation protein A (247 aa).

It belongs to the ScpA family. Component of a cohesin-like complex composed of ScpA, ScpB and the Smc homodimer, in which ScpA and ScpB bind to the head domain of Smc. The presence of the three proteins is required for the association of the complex with DNA.

The protein localises to the cytoplasm. Participates in chromosomal partition during cell division. May act via the formation of a condensin-like complex containing Smc and ScpB that pull DNA away from mid-cell into both cell halves. This Bacillus cereus (strain AH187) protein is Segregation and condensation protein A.